The following is a 115-amino-acid chain: Phosphorelay protein LuxU (115 aa).

Residues G17–Y107 enclose the HPt domain. At H56 the chain carries Phosphohistidine.

As to quaternary structure, monomer.

In terms of biological role, phosphorelay protein which receives a sensory signal from a sensor kinase and transmit it to LuxO. At low cell density, a phosphoryl group is transferred from the sensor kinase, probably on His-56 and this phosphoryl group is further transferred to LuxO. This Vibrio vulnificus (strain CMCP6) protein is Phosphorelay protein LuxU (luxU).